Here is a 180-residue protein sequence, read N- to C-terminus: Large ribosomal subunit protein uL5 (180 aa).

Belongs to the universal ribosomal protein uL5 family. Part of the 50S ribosomal subunit; part of the 5S rRNA/L5/L18/L25 subcomplex. Contacts the 5S rRNA and the P site tRNA. Forms a bridge to the 30S subunit in the 70S ribosome.

In terms of biological role, this is one of the proteins that bind and probably mediate the attachment of the 5S RNA into the large ribosomal subunit, where it forms part of the central protuberance. In the 70S ribosome it contacts protein S13 of the 30S subunit (bridge B1b), connecting the 2 subunits; this bridge is implicated in subunit movement. Contacts the P site tRNA; the 5S rRNA and some of its associated proteins might help stabilize positioning of ribosome-bound tRNAs. This Streptococcus mutans serotype c (strain ATCC 700610 / UA159) protein is Large ribosomal subunit protein uL5.